The primary structure comprises 98 residues: NADH-ubiquinone oxidoreductase chain 4L (98 aa).

3 consecutive transmembrane segments (helical) span residues Met1 to Ile21, Ser28 to Ile48, and Ala59 to Val79.

Belongs to the complex I subunit 4L family. Core subunit of respiratory chain NADH dehydrogenase (Complex I) which is composed of 45 different subunits.

The protein resides in the mitochondrion inner membrane. The enzyme catalyses a ubiquinone + NADH + 5 H(+)(in) = a ubiquinol + NAD(+) + 4 H(+)(out). In terms of biological role, core subunit of the mitochondrial membrane respiratory chain NADH dehydrogenase (Complex I) which catalyzes electron transfer from NADH through the respiratory chain, using ubiquinone as an electron acceptor. Part of the enzyme membrane arm which is embedded in the lipid bilayer and involved in proton translocation. The chain is NADH-ubiquinone oxidoreductase chain 4L (MT-ND4L) from Lagorchestes hirsutus (Rufous hare-wallaby).